We begin with the raw amino-acid sequence, 135 residues long: ATP synthase epsilon chain (135 aa).

Residues 91–122 (EAQKQLSEAEQAWSKFDGQPNSPDKIKAQQAF) are disordered.

The protein belongs to the ATPase epsilon chain family. In terms of assembly, F-type ATPases have 2 components, CF(1) - the catalytic core - and CF(0) - the membrane proton channel. CF(1) has five subunits: alpha(3), beta(3), gamma(1), delta(1), epsilon(1). CF(0) has three main subunits: a, b and c.

It is found in the cellular thylakoid membrane. Its function is as follows. Produces ATP from ADP in the presence of a proton gradient across the membrane. The chain is ATP synthase epsilon chain from Synechococcus sp. (strain RCC307).